The chain runs to 140 residues: Putative 6-pyruvoyl tetrahydrobiopterin synthase (140 aa).

Histidine 19 contacts Zn(2+). The active-site Proton acceptor is cysteine 38. Positions 44 and 46 each coordinate Zn(2+). Residues histidine 84 and glutamate 129 each act as charge relay system in the active site.

The protein belongs to the PTPS family. As to quaternary structure, homohexamer formed of two homotrimers in a head to head fashion. Requires Zn(2+) as cofactor.

The enzyme catalyses 7,8-dihydroneopterin 3'-triphosphate = 6-pyruvoyl-5,6,7,8-tetrahydropterin + triphosphate + H(+). The protein operates within cofactor biosynthesis; tetrahydrobiopterin biosynthesis; tetrahydrobiopterin from 7,8-dihydroneopterin triphosphate: step 1/3. Its function is as follows. Involved in the biosynthesis of tetrahydrobiopterin, an essential cofactor of aromatic amino acid hydroxylases. Catalyzes the transformation of 7,8-dihydroneopterin triphosphate into 6-pyruvoyl tetrahydropterin. The protein is Putative 6-pyruvoyl tetrahydrobiopterin synthase (ptps-1) of Caenorhabditis elegans.